Consider the following 89-residue polypeptide: Translation initiation factor IF-1, chloroplastic (89 aa).

Residues 1–72 (MKKQDLIDME…TKGRIIYRLR (72 aa)) enclose the S1-like domain.

The protein belongs to the IF-1 family. In terms of assembly, component of the 30S ribosomal translation pre-initiation complex which assembles on the 30S ribosome in the order IF-2 and IF-3, IF-1 and N-formylmethionyl-tRNA(fMet); mRNA recruitment can occur at any time during PIC assembly.

It localises to the plastid. The protein localises to the chloroplast. Functionally, one of the essential components for the initiation of protein synthesis. Stabilizes the binding of IF-2 and IF-3 on the 30S subunit to which N-formylmethionyl-tRNA(fMet) subsequently binds. Helps modulate mRNA selection, yielding the 30S pre-initiation complex (PIC). Upon addition of the 50S ribosomal subunit IF-1, IF-2 and IF-3 are released leaving the mature 70S translation initiation complex. The polypeptide is Translation initiation factor IF-1, chloroplastic (Angiopteris evecta (Mule's foot fern)).